Reading from the N-terminus, the 57-residue chain is MDIQVIKQAVREVLREELPSILKEVILSTIPPDEPEADEKQFVDEEINEDDYVKFDE.

This is an uncharacterized protein from Archaeoglobus fulgidus (strain ATCC 49558 / DSM 4304 / JCM 9628 / NBRC 100126 / VC-16).